Here is a 75-residue protein sequence, read N- to C-terminus: Small ribosomal subunit protein bS18 (75 aa).

This sequence belongs to the bacterial ribosomal protein bS18 family. In terms of assembly, part of the 30S ribosomal subunit. Forms a tight heterodimer with protein bS6.

Binds as a heterodimer with protein bS6 to the central domain of the 16S rRNA, where it helps stabilize the platform of the 30S subunit. This Shewanella frigidimarina (strain NCIMB 400) protein is Small ribosomal subunit protein bS18.